An 811-amino-acid chain; its full sequence is LPS-assembly protein LptD (811 aa).

An N-terminal signal peptide occupies residues 1 to 17; sequence MTEPNRARKTRQRTAFA. Residues 1 to 22 are disordered; sequence MTEPNRARKTRQRTAFAAPDQR.

The protein belongs to the LptD family. Component of the lipopolysaccharide transport and assembly complex. Interacts with LptE and LptA.

The protein localises to the cell outer membrane. Together with LptE, is involved in the assembly of lipopolysaccharide (LPS) at the surface of the outer membrane. The sequence is that of LPS-assembly protein LptD from Ralstonia nicotianae (strain ATCC BAA-1114 / GMI1000) (Ralstonia solanacearum).